A 336-amino-acid polypeptide reads, in one-letter code: E3 ubiquitin-protein ligase RING2 (336 aa).

Residue Ser-2 is modified to N-acetylserine. The segment at 2–179 (SQAVQTNGTQ…AEDNGDSSHC (178 aa)) is interaction with HIP2. Ser-41 is subject to Phosphoserine. The RING-type zinc finger occupies 51–91 (CPICLDMLKNTMTTKECLHRFCADCIITALRSGNKECPTCR). Positions 93 to 98 (KLVSKR) are interaction with nucleosomes via an acidic patch on histone H2A and histone H2B. Lys-112 is covalently cross-linked (Glycyl lysine isopeptide (Lys-Gly) (interchain with G-Cter in ubiquitin)). Phosphoserine is present on residues Ser-143 and Ser-168. The tract at residues 157–213 (QRGKKQQIENGSGAEDNGDSSHCSNASTHSNQEAGPSNKRTKTSDDSGLEPDNNNAA) is disordered. Polar residues predominate over residues 176–191 (SSHCSNASTHSNQEAG). Residues Lys-249 and Lys-323 each participate in a glycyl lysine isopeptide (Lys-Gly) (interchain with G-Cter in SUMO2) cross-link.

In terms of assembly, component of chromatin-associated Polycomb (PcG) complexes. Component of a number of PRC1-like complexes; these complexes contain either the polycomb group ring finger protein PCGF1, or PCGF2, or PCGF3, or BMI1, or PCGF5, or PCGF6. Distinct PRC1-like complexes are composed of a RING1 subunit (RING1B or RING1A), one of the six PCGF proteins (PCGF1, PCGF2, PCGF3, BMI1, PCGF5 or PCGF6), one PHC protein (PHC1, PHC2 or PHC3) and one of the CBX proteins (CBX2, CBX4, CBX6, CBX7 or CBX8). Part of a complex that contains RNF2, UB2D3 and BMI1; within that complex RNF2 and BMI1 form a tight heterodimer, where UB2D3 interacts only with RNF2. The complex composed of RNF2, UB2D3 and BMI1 binds nucleosomes, and has activity only with nucleosomal histone H2A. Part of a complex that contains PCGF5, RNF2 and UBE2D3. Part of a complex that contains AUTS2, PCGF5, RNF2, CSNK2B and RYBP. Interacts with CBX6 and CBX8. Interacts with PHC1, PCGF2, RYBP, CBX7, CBX4, CBX2, RNF1/RING1, BMI1 and PHC2. Interaction with RYBP and CBX7 is mutually exclusive; both compete for the same binding site on RNF2. Component of repressive BCOR complex containing a Polycomb group subcomplex at least composed of RYBP, PCGF1, BCOR and RING1. Interacts with CBX2 and PHC1. Interacts with CHTOP. Interacts with AURKB. Part of the E2F6.com-1 complex in G0 phase composed of E2F6, MGA, MAX, TFDP1, CBX3, BAT8, EUHMTASE1, RNF1/RING1, RNF2/RING2, MBLR, L3MBTL2 and YAF2. Component of some MLL1/MLL complex, at least composed of the core components KMT2A/MLL1, ASH2L, HCFC1/HCF1, WDR5 and RBBP5, as well as the facultative components BACC1, CHD8, E2F6, HSP70, INO80C, KANSL1, LAS1L, MAX, MCRS1, MGA, MYST1/MOF, PELP1, PHF20, PRP31, RING2, RUVB1/TIP49A, RUVB2/TIP49B, SENP3, TAF1, TAF4, TAF6, TAF7, TAF9 and TEX10. Interacts with RYBP, HIP2 and TFCP2. Interacts with NUPR1. Interacts with SAMD7 in a PHC2-dependent manner. Post-translationally, monoubiquitinated, by auto-ubiquitination. Polyubiquitinated in the presence of UBE2D3 (in vitro).

The protein localises to the nucleus. It localises to the cytoplasm. Its subcellular location is the chromosome. It catalyses the reaction S-ubiquitinyl-[E2 ubiquitin-conjugating enzyme]-L-cysteine + [acceptor protein]-L-lysine = [E2 ubiquitin-conjugating enzyme]-L-cysteine + N(6)-ubiquitinyl-[acceptor protein]-L-lysine.. It participates in protein modification; protein ubiquitination. Its function is as follows. E3 ubiquitin-protein ligase that mediates monoubiquitination of 'Lys-119' of histone H2A (H2AK119Ub), thereby playing a central role in histone code and gene regulation. H2AK119Ub gives a specific tag for epigenetic transcriptional repression and participates in X chromosome inactivation of female mammals. May be involved in the initiation of both imprinted and random X inactivation. Essential component of a Polycomb group (PcG) multiprotein PRC1-like complex, a complex class required to maintain the transcriptionally repressive state of many genes, including Hox genes, throughout development. PcG PRC1 complex acts via chromatin remodeling and modification of histones, rendering chromatin heritably changed in its expressibility. E3 ubiquitin-protein ligase activity is enhanced by BMI1/PCGF4. Acts as the main E3 ubiquitin ligase on histone H2A of the PRC1 complex, while RING1 may rather act as a modulator of RNF2/RING2 activity. Plays a role in the transcriptional repression of genes that are required for pluripotency in embryonic stem cells, thereby contributing to differentiation of the ectodermal and endodermal germ layers. Association with the chromosomal DNA is cell-cycle dependent. In resting B- and T-lymphocytes, interaction with AURKB leads to block its activity, thereby maintaining transcription in resting lymphocytes. Also acts as a negative regulator of autophagy by mediating ubiquitination of AMBRA1, leading to its subsequent degradation. In Pongo abelii (Sumatran orangutan), this protein is E3 ubiquitin-protein ligase RING2 (RNF2).